A 406-amino-acid polypeptide reads, in one-letter code: DNA primase large subunit PriL (406 aa).

4 residues coordinate [4Fe-4S] cluster: Cys-302, Cys-375, Cys-384, and Cys-389.

The protein belongs to the eukaryotic-type primase large subunit family. Heterodimer of a small subunit (PriS) and a large subunit (PriL). [4Fe-4S] cluster is required as a cofactor.

Functionally, regulatory subunit of DNA primase, an RNA polymerase that catalyzes the synthesis of short RNA molecules used as primers for DNA polymerase during DNA replication. Stabilizes and modulates the activity of the small subunit, increasing the rate of DNA synthesis, and conferring RNA synthesis capability. The DNA polymerase activity may enable DNA primase to also catalyze primer extension after primer synthesis. May also play a role in DNA repair. The sequence is that of DNA primase large subunit PriL from Methanopyrus kandleri (strain AV19 / DSM 6324 / JCM 9639 / NBRC 100938).